Consider the following 599-residue polypeptide: NTPase KAP family P-loop domain-containing protein 1 (599 aa).

The region spanning 1–416 (MQQEAAQRES…NTVPITVRLL (416 aa)) is the KAP NTPase domain. The next 3 membrane-spanning stretches (helical) occupy residues 25–45 (GWGV…ITEL), 119–139 (VCLA…LLYL), and 156–176 (ALGG…VYSV). The interval 543 to 599 (ALKPPSPPKSPSQDGPQASPRAIIAAGTSHAGQGSGHSKEAHQTRDRTHGGKPRPMA) is disordered. The span at 579 to 591 (HSKEAHQTRDRTH) shows a compositional bias: basic and acidic residues.

It is found in the membrane. In Mus musculus (Mouse), this protein is NTPase KAP family P-loop domain-containing protein 1 (Nkpd1).